Consider the following 339-residue polypeptide: Dihydroorotate dehydrogenase (quinone) (339 aa).

FMN contacts are provided by residues 62–66 and Thr-86; that span reads AGMDK. Lys-66 is a binding site for substrate. 111–115 contributes to the substrate binding site; the sequence is NRMGF. FMN is bound by residues Asn-139 and Asn-172. Position 172 (Asn-172) interacts with substrate. The active-site Nucleophile is the Ser-175. A substrate-binding site is contributed by Asn-177. FMN contacts are provided by Lys-217 and Thr-245. Position 246-247 (246-247) interacts with substrate; it reads NT. FMN is bound by residues Gly-268, Gly-297, and 318–319; that span reads YS.

It belongs to the dihydroorotate dehydrogenase family. Type 2 subfamily. In terms of assembly, monomer. FMN is required as a cofactor.

The protein localises to the cell membrane. The enzyme catalyses (S)-dihydroorotate + a quinone = orotate + a quinol. The protein operates within pyrimidine metabolism; UMP biosynthesis via de novo pathway; orotate from (S)-dihydroorotate (quinone route): step 1/1. Its function is as follows. Catalyzes the conversion of dihydroorotate to orotate with quinone as electron acceptor. This chain is Dihydroorotate dehydrogenase (quinone), found in Shewanella sp. (strain MR-4).